Here is a 333-residue protein sequence, read N- to C-terminus: 1,5-anhydro-D-fructose reductase (333 aa).

NADP(+) is bound by residues 9–12 (ASTI), 33–34 (ST), arginine 38, 71–76 (TTNELH), 93–94 (EK), asparagine 120, 162–163 (WR), and tyrosine 283.

In terms of assembly, monomer.

The enzyme catalyses 1,5-anhydro-D-mannitol + NADP(+) = 1,5-anhydro-D-fructose + NADPH + H(+). Its function is as follows. Catalyzes the NADPH-specific reduction of 1,5-anhydro-D-fructose to 1,5-anhydro-D-mannitol. Also shows some activity against structurally related compounds such as 3-keto-1,5-anhydro-D-fructose, D-glucosone and D-xylosone. The enzyme cannot use NADH as cosubstrate. This chain is 1,5-anhydro-D-fructose reductase (afr), found in Ensifer adhaerens (Sinorhizobium morelense).